Here is a 185-residue protein sequence, read N- to C-terminus: Ribosome-recycling factor (185 aa).

This sequence belongs to the RRF family.

The protein resides in the cytoplasm. Responsible for the release of ribosomes from messenger RNA at the termination of protein biosynthesis. May increase the efficiency of translation by recycling ribosomes from one round of translation to another. This chain is Ribosome-recycling factor, found in Aliivibrio fischeri (strain ATCC 700601 / ES114) (Vibrio fischeri).